The chain runs to 331 residues: Peroxidase 49 (331 aa).

The N-terminal stretch at methionine 1 to cysteine 22 is a signal peptide. 4 disulfide bridges follow: cysteine 39–cysteine 119, cysteine 72–cysteine 77, cysteine 125–cysteine 326, and cysteine 204–cysteine 236. Histidine 70 serves as the catalytic Proton acceptor. Positions 71, 74, 76, 78, and 80 each coordinate Ca(2+). Proline 167 contributes to the substrate binding site. A glycan (N-linked (GlcNAc...) asparagine) is linked at asparagine 170. A heme b-binding site is contributed by histidine 197. Threonine 198 contacts Ca(2+). A glycan (N-linked (GlcNAc...) asparagine) is linked at asparagine 213. Ca(2+) is bound by residues aspartate 249, serine 252, and aspartate 257.

Belongs to the peroxidase family. Classical plant (class III) peroxidase subfamily. The cofactor is heme b. It depends on Ca(2+) as a cofactor.

Its subcellular location is the secreted. It catalyses the reaction 2 a phenolic donor + H2O2 = 2 a phenolic radical donor + 2 H2O. Functionally, removal of H(2)O(2), oxidation of toxic reductants, biosynthesis and degradation of lignin, suberization, auxin catabolism, response to environmental stresses such as wounding, pathogen attack and oxidative stress. These functions might be dependent on each isozyme/isoform in each plant tissue. This is Peroxidase 49 (PER49) from Arabidopsis thaliana (Mouse-ear cress).